A 1233-amino-acid chain; its full sequence is Structural maintenance of chromosomes protein 1A (1233 aa).

32 to 39 (GPNGSGKS) is a binding site for ATP. Coiled coils occupy residues 104-124 (EYKINNKVVQLHEYSEELEKL) and 163-503 (ELAQ…KAEI). The span at 284-293 (IKEKDSELNQ) shows a compositional bias: basic and acidic residues. Disordered stretches follow at residues 284–308 (IKEKDSELNQKRPQYIKAKENTSHK) and 348–369 (QEFEERMEEESQSQGRDLTLEE). Ser-358 and Ser-360 each carry phosphoserine. The SMC hinge domain maps to 515–629 (VYGRLIDLCQ…DNVEDARRIA (115 aa)). N6-acetyllysine occurs at positions 648 and 713. Positions 660–935 (KAKARRWDEK…RHNLLQACKM (276 aa)) form a coiled coil. Residues 947–968 (MDDISQEEGSSQGEDSVSGSQR) are disordered. Low complexity predominate over residues 953–967 (EEGSSQGEDSVSGSQ). Phosphoserine occurs at positions 957, 962, 966, and 970. Residues 991–1068 (KDAQAEEEIK…FEQIKKERFD (78 aa)) adopt a coiled-coil conformation. At Lys-1037 the chain carries N6-acetyllysine.

The protein belongs to the SMC family. SMC1 subfamily. As to quaternary structure, forms a heterodimer with SMC3 in cohesin complexes. Cohesin complexes are composed of the SMC1 (SMC1A or meiosis-specific SMC1B) and SMC3 heterodimer attached via their SMC hinge domain, RAD21 which link them, and one STAG protein (STAG1, STAG2 or meiosis-specific STAG3), which interacts with RAD21. In germ cell cohesin complexes, SMC1A is mutually exclusive with SMC1B. Found in a complex with CDCA5, SMC3 and RAD21, PDS5A/SCC-112 and PDS5B/APRIN. Interacts with NDC80, SYCP2, STAG3, BRCA1 and BRAT1. The cohesin complex interacts with the cohesin loading complex subunits NIPBL/Scc2 (via HEAT repeats) and MAU2/Scc4. NIPBL directly contacts all members of the complex, RAD21, SMC1A/B, SMC3 and STAG1. Interacts with RPGR. Found in a complex containing POLE and SMC3. Phosphorylated upon ionizing radiation or DNA methylation. Phosphorylation of Ser-957 and Ser-966 activates it and is required for S-phase checkpoint activation. In terms of processing, ubiquitinated by the DCX(DCAF15) complex, leading to its degradation.

Its subcellular location is the nucleus. The protein localises to the chromosome. It is found in the centromere. In terms of biological role, involved in chromosome cohesion during cell cycle and in DNA repair. Involved in DNA repair via its interaction with BRCA1 and its related phosphorylation by ATM, and works as a downstream effector in the ATM/NBS1 branch of S-phase checkpoint. Central component of cohesin complex. The cohesin complex is required for the cohesion of sister chromatids after DNA replication. The cohesin complex apparently forms a large proteinaceous ring within which sister chromatids can be trapped. At anaphase, the complex is cleaved and dissociates from chromatin, allowing sister chromatids to segregate. The cohesin complex may also play a role in spindle pole assembly during mitosis. Involved in DNA repair via its interaction with BRCA1 and its related phosphorylation by ATM, or via its phosphorylation by ATR. Works as a downstream effector both in the ATM/NBS1 branch and in the ATR/MSH2 branch of S-phase checkpoint. The chain is Structural maintenance of chromosomes protein 1A (SMC1A) from Bos taurus (Bovine).